A 319-amino-acid polypeptide reads, in one-letter code: tRNA N6-adenosine threonylcarbamoyltransferase (319 aa).

Residues His110 and His114 each coordinate Fe cation. Residues 132–136 (VVSGG), Asp165, Gly178, Asp182, and Asn271 each bind substrate. Residue Asp300 participates in Fe cation binding.

Belongs to the KAE1 / TsaD family. Fe(2+) is required as a cofactor.

It localises to the cytoplasm. The enzyme catalyses L-threonylcarbamoyladenylate + adenosine(37) in tRNA = N(6)-L-threonylcarbamoyladenosine(37) in tRNA + AMP + H(+). Functionally, required for the formation of a threonylcarbamoyl group on adenosine at position 37 (t(6)A37) in tRNAs that read codons beginning with adenine. Is involved in the transfer of the threonylcarbamoyl moiety of threonylcarbamoyl-AMP (TC-AMP) to the N6 group of A37, together with TsaE and TsaB. TsaD likely plays a direct catalytic role in this reaction. The sequence is that of tRNA N6-adenosine threonylcarbamoyltransferase from Mycoplasma capricolum subsp. capricolum (strain California kid / ATCC 27343 / NCTC 10154).